A 189-amino-acid chain; its full sequence is Development-specific protein LVN1.2 (189 aa).

In terms of tissue distribution, endoderm cells.

This is Development-specific protein LVN1.2 from Lytechinus variegatus (Green sea urchin).